Consider the following 423-residue polypeptide: Inactive autotransporter heptosyltransferase BimC (423 aa).

The span at 1 to 10 (MPKVTFSGSA) shows a compositional bias: polar residues. A disordered region spans residues 1-49 (MPKVTFSGSAPTLGVHAPPALDPRQPASPPPAASNGTHARGFSPPADMP). Fe(3+) is bound by residues Cys-371, Cys-374, Cys-390, and Cys-402.

It belongs to the glycosyltransferase 9 family. As to quaternary structure, homotrimer or homotetramer. It depends on Fe(3+) as a cofactor.

It localises to the cell inner membrane. The protein localises to the cytoplasm. Its function is as follows. Iron-binding protein which is required for the asymmetric polar distribution of the autotransporter BimA on the bacterial surface prior to its translocation into bacterial periplasm. Lacks heptosyltransferase activity. This is Inactive autotransporter heptosyltransferase BimC from Burkholderia thailandensis (strain ATCC 700388 / DSM 13276 / CCUG 48851 / CIP 106301 / E264).